Consider the following 87-residue polypeptide: Large ribosomal subunit protein bL27 (87 aa).

The protein belongs to the bacterial ribosomal protein bL27 family.

The polypeptide is Large ribosomal subunit protein bL27 (Phocaeicola vulgatus (strain ATCC 8482 / DSM 1447 / JCM 5826 / CCUG 4940 / NBRC 14291 / NCTC 11154) (Bacteroides vulgatus)).